We begin with the raw amino-acid sequence, 489 residues long: Ketol-acid reductoisomerase (NADP(+)) (489 aa).

One can recognise a KARI N-terminal Rossmann domain in the interval isoleucine 16–serine 207. Residues cysteine 44 to glutamine 47, arginine 67, serine 77, and aspartate 107 to glutamine 109 each bind NADP(+). Histidine 131 is an active-site residue. Glycine 157 provides a ligand contact to NADP(+). KARI C-terminal knotted domains lie at serine 208–aspartate 343 and tyrosine 344–methionine 483. Mg(2+)-binding residues include aspartate 216, glutamate 220, glutamate 388, and glutamate 392. Serine 413 contributes to the substrate binding site.

Belongs to the ketol-acid reductoisomerase family. It depends on Mg(2+) as a cofactor.

It catalyses the reaction (2R)-2,3-dihydroxy-3-methylbutanoate + NADP(+) = (2S)-2-acetolactate + NADPH + H(+). It carries out the reaction (2R,3R)-2,3-dihydroxy-3-methylpentanoate + NADP(+) = (S)-2-ethyl-2-hydroxy-3-oxobutanoate + NADPH + H(+). It participates in amino-acid biosynthesis; L-isoleucine biosynthesis; L-isoleucine from 2-oxobutanoate: step 2/4. It functions in the pathway amino-acid biosynthesis; L-valine biosynthesis; L-valine from pyruvate: step 2/4. In terms of biological role, involved in the biosynthesis of branched-chain amino acids (BCAA). Catalyzes an alkyl-migration followed by a ketol-acid reduction of (S)-2-acetolactate (S2AL) to yield (R)-2,3-dihydroxy-isovalerate. In the isomerase reaction, S2AL is rearranged via a Mg-dependent methyl migration to produce 3-hydroxy-3-methyl-2-ketobutyrate (HMKB). In the reductase reaction, this 2-ketoacid undergoes a metal-dependent reduction by NADPH to yield (R)-2,3-dihydroxy-isovalerate. This chain is Ketol-acid reductoisomerase (NADP(+)), found in Buchnera aphidicola subsp. Diuraphis noxia.